The sequence spans 569 residues: Sulfite reductase [NADPH] hemoprotein beta-component (569 aa).

[4Fe-4S] cluster contacts are provided by C433, C439, C478, and C482. C482 provides a ligand contact to siroheme.

The protein belongs to the nitrite and sulfite reductase 4Fe-4S domain family. Alpha(8)-beta(8). The alpha component is a flavoprotein, the beta component is a hemoprotein. Siroheme serves as cofactor. The cofactor is [4Fe-4S] cluster.

It carries out the reaction hydrogen sulfide + 3 NADP(+) + 3 H2O = sulfite + 3 NADPH + 4 H(+). Its pathway is sulfur metabolism; hydrogen sulfide biosynthesis; hydrogen sulfide from sulfite (NADPH route): step 1/1. Component of the sulfite reductase complex that catalyzes the 6-electron reduction of sulfite to sulfide. This is one of several activities required for the biosynthesis of L-cysteine from sulfate. In Buchnera aphidicola subsp. Acyrthosiphon pisum (strain Tuc7), this protein is Sulfite reductase [NADPH] hemoprotein beta-component.